Here is a 206-residue protein sequence, read N- to C-terminus: Small ribosomal subunit protein uS4 (206 aa).

In terms of domain architecture, S4 RNA-binding spans 96-156; the sequence is TRLDNVVYRM…EKSQKQARIK (61 aa).

This sequence belongs to the universal ribosomal protein uS4 family. In terms of assembly, part of the 30S ribosomal subunit. Contacts protein S5. The interaction surface between S4 and S5 is involved in control of translational fidelity.

Functionally, one of the primary rRNA binding proteins, it binds directly to 16S rRNA where it nucleates assembly of the body of the 30S subunit. In terms of biological role, with S5 and S12 plays an important role in translational accuracy. In Shewanella loihica (strain ATCC BAA-1088 / PV-4), this protein is Small ribosomal subunit protein uS4.